The chain runs to 462 residues: 2-(3-amino-3-carboxypropyl)histidine synthase subunit 1 (462 aa).

Residues methionine 1–alanine 87 form a disordered region. The segment covering glutamate 35–alanine 44 has biased composition (polar residues). [4Fe-4S] cluster is bound by residues cysteine 173, cysteine 276, and cysteine 406.

This sequence belongs to the DPH1/DPH2 family. DPH1 subfamily. As to quaternary structure, component of the 2-(3-amino-3-carboxypropyl)histidine synthase complex composed of DPH1, DPH2, DPH3 and a NADH-dependent reductase, predominantly CBR1. It depends on [4Fe-4S] cluster as a cofactor.

The protein localises to the cytoplasm. The catalysed reaction is L-histidyl-[translation elongation factor 2] + S-adenosyl-L-methionine = 2-[(3S)-amino-3-carboxypropyl]-L-histidyl-[translation elongation factor 2] + S-methyl-5'-thioadenosine + H(+). Its pathway is protein modification; peptidyl-diphthamide biosynthesis. Its function is as follows. Catalyzes the first step of diphthamide biosynthesis, a post-translational modification of histidine which occurs in elongation factor 2. DPH1 and DPH2 transfer a 3-amino-3-carboxypropyl (ACP) group from S-adenosyl-L-methionine (SAM) to a histidine residue, the reaction is assisted by a reduction system comprising DPH3 and a NADH-dependent reductase, predominantly CBR1. The polypeptide is 2-(3-amino-3-carboxypropyl)histidine synthase subunit 1 (DPH1) (Gibberella zeae (strain ATCC MYA-4620 / CBS 123657 / FGSC 9075 / NRRL 31084 / PH-1) (Wheat head blight fungus)).